A 66-amino-acid chain; its full sequence is Ocellatin-PT3 (66 aa).

The N-terminal stretch at 1–22 (MAFLKKSLFLVLFLGLVSLSIC) is a signal peptide. The propeptide occupies 23–39 (DEEKRQDEDDDDDDDEE). Val66 is modified (valine amide).

As to expression, expressed by the skin glands.

The protein resides in the secreted. Functionally, has antibacterial activity against Gram-negative bacterium E.coli ATCC 25922 (MIC=320 uM) but not against S.pneumoniae ATCC 700603, S.choleraesuis ATCC 14028 or Gram-positive bacterium S.aureus ATCC 29313. Shows no hemolytic activity and no cytotoxicity. The polypeptide is Ocellatin-PT3 (Leptodactylus pustulatus (Ceara white-lipped frog)).